The following is a 235-amino-acid chain: MDIKINDFEGPLDLLLHLVSKYQMDIYQVPIVAVIEQYLAYIETLQAMKLEVAGEYMVMASQLMLIKSRRLLPTITEVSSEELDPEEDLLSKIEEYSRFKELSQQLGYQHDQRALLFSKPKQELIFEDAVLNEDKSITDLFLAFSKIMAIKQEEVKNNHTVIERDDFRIEDMMDHLDTVLNAKTEITLSEVFKDCTSINEVITMFLATLELIKIQAVTVFQEDNFSDIILRKENR.

Belongs to the ScpA family. In terms of assembly, component of a cohesin-like complex composed of ScpA, ScpB and the Smc homodimer, in which ScpA and ScpB bind to the head domain of Smc. The presence of the three proteins is required for the association of the complex with DNA.

The protein localises to the cytoplasm. Its function is as follows. Participates in chromosomal partition during cell division. May act via the formation of a condensin-like complex containing Smc and ScpB that pull DNA away from mid-cell into both cell halves. This chain is Segregation and condensation protein A, found in Streptococcus uberis (strain ATCC BAA-854 / 0140J).